We begin with the raw amino-acid sequence, 287 residues long: 4-hydroxybenzoate octaprenyltransferase (287 aa).

9 helical membrane passes run 19–39, 43–63, 94–114, 118–138, 142–162, 167–187, 209–229, 235–255, and 263–283; these read PIGT…ASSG, LQML…GCAI, VVVA…LNIF, LSVL…FLAI, VLGI…LDFI, WVLF…YAMV, VLAI…VAHL, YFLI…KLVS, and FLAF…IVLG.

It belongs to the UbiA prenyltransferase family. Requires Mg(2+) as cofactor.

Its subcellular location is the cell inner membrane. It carries out the reaction all-trans-octaprenyl diphosphate + 4-hydroxybenzoate = 4-hydroxy-3-(all-trans-octaprenyl)benzoate + diphosphate. The protein operates within cofactor biosynthesis; ubiquinone biosynthesis. Catalyzes the prenylation of para-hydroxybenzoate (PHB) with an all-trans polyprenyl group. Mediates the second step in the final reaction sequence of ubiquinone-8 (UQ-8) biosynthesis, which is the condensation of the polyisoprenoid side chain with PHB, generating the first membrane-bound Q intermediate 3-octaprenyl-4-hydroxybenzoate. This chain is 4-hydroxybenzoate octaprenyltransferase, found in Polynucleobacter asymbioticus (strain DSM 18221 / CIP 109841 / QLW-P1DMWA-1) (Polynucleobacter necessarius subsp. asymbioticus).